A 365-amino-acid chain; its full sequence is Aminomethyltransferase (365 aa).

Belongs to the GcvT family. The glycine cleavage system is composed of four proteins: P, T, L and H.

It carries out the reaction N(6)-[(R)-S(8)-aminomethyldihydrolipoyl]-L-lysyl-[protein] + (6S)-5,6,7,8-tetrahydrofolate = N(6)-[(R)-dihydrolipoyl]-L-lysyl-[protein] + (6R)-5,10-methylene-5,6,7,8-tetrahydrofolate + NH4(+). The glycine cleavage system catalyzes the degradation of glycine. The sequence is that of Aminomethyltransferase from Yersinia enterocolitica serotype O:8 / biotype 1B (strain NCTC 13174 / 8081).